The primary structure comprises 160 residues: Cytochrome b6-f complex subunit 4 (160 aa).

The next 3 helical transmembrane spans lie at 36–56 (LLYI…GLAV), 95–115 (LLGV…PFLE), and 131–151 (TVFL…TLPI).

Belongs to the cytochrome b family. PetD subfamily. In terms of assembly, the 4 large subunits of the cytochrome b6-f complex are cytochrome b6, subunit IV (17 kDa polypeptide, petD), cytochrome f and the Rieske protein, while the 4 small subunits are petG, petL, petM and petN. The complex functions as a dimer.

It localises to the plastid. It is found in the chloroplast thylakoid membrane. In terms of biological role, component of the cytochrome b6-f complex, which mediates electron transfer between photosystem II (PSII) and photosystem I (PSI), cyclic electron flow around PSI, and state transitions. This chain is Cytochrome b6-f complex subunit 4, found in Daucus carota (Wild carrot).